A 1669-amino-acid polypeptide reads, in one-letter code: Polycomb group protein Asx (1669 aa).

The interval 90–109 (IPPEKKPMAPSEEAAVSTAP) is disordered. One can recognise a DEUBAD domain in the interval 215-338 (PDSILASTNL…FEPFWGEKNS (124 aa)). 2 consecutive short sequence motifs (LXXLL motif) follow at residues 224 to 228 (LRALL) and 244 to 248 (LIQLL). The NEF motif motif lies at 283-285 (NEF). The span at 336–352 (KNSRGKDKDKLESDCKN) shows a compositional bias: basic and acidic residues. 8 disordered regions span residues 336–378 (KNSR…QQAT), 410–478 (SSTF…IVPN), 635–718 (FFTS…SAGA), 952–972 (MPHQASQQPQQNAQSNAQQQR), 1174–1193 (QQQSPPVPAPQQQTVQQQQL), 1398–1437 (PGPGGATATAQQLQMLQQHHQSTTSPVPVQNPQQPAPEQL), 1482–1505 (LHSINGIPMGGRGRPASVDTTAGS), and 1587–1610 (SPTAAPSPINQQPQSQPTGTQHQH). Composition is skewed to polar residues over residues 367-378 (ATSQQKPLQQAT), 413-425 (FPPTGSQNNVLNE), and 434-450 (PSSSPSQRKQAPTTIAT). The span at 465 to 474 (KDSKQPKMDE) shows a compositional bias: basic and acidic residues. A compositionally biased stretch (low complexity) spans 635–650 (FFTSSSSSNTATTAAN). The segment covering 651-661 (KLEEHSDKPED) has biased composition (basic and acidic residues). The segment covering 666–718 (IASSISGSTPASSITSTSCTSSSSSSASMSSSCSSSNSGSTTTAPTTSSSAGA) has biased composition (low complexity). Low complexity-rich tracts occupy residues 1174 to 1192 (QQQSPPVPAPQQQTVQQQQ) and 1404 to 1436 (TATAQQLQMLQQHHQSTTSPVPVQNPQQPAPEQ). Residues 1592-1610 (PSPINQQPQSQPTGTQHQH) are compositionally biased toward low complexity. The PHD-type; atypical zinc-finger motif lies at 1602 to 1666 (QPTGTQHQHP…IGAAKLCVAC (65 aa)).

This sequence belongs to the Asx family. Component of the polycomb repressive deubiquitinase (PR-DUB) complex, at least composed of caly/calypso, Asx and sba (MBD5/6 homolog). Interacts (via DEUBAD domain) with caly/calypso (via ULD domain); the interaction produces a stable heterodimer with a composite binding site for ubiquitin. Two copies of the caly-Asx heterodimer assemble into a bidentate tetramer. Interacts (via PHD domain) with sba (probably via MBD domain); the interaction is important for the stability of the PR-DUB complex. Interacts with tant. Interacts with cyclin CycG. In terms of tissue distribution, highly expressed in nurse cells and deposited in oocytes late in oogenesis. Ubiquitous in early embryos. Late embryos show higher levels in CNS and neurectoderm.

The protein localises to the nucleus. It localises to the chromosome. Its function is as follows. Non-catalytic component of the polycomb repressive deubiquitinase (PR-DUB) complex, a complex that specifically mediates deubiquitination of histone H2A monoubiquitinated at 'Lys-119' (H2AK118ub1). Activator of the PR-DUB complex involved in ubiquitin binding and allosteric activation of calypso deubiquitinase activity. PR-DUB does not deubiquitinate monoubiquitinated histone H2B. PR-DUB is required to maintain the transcriptionally repressive state of homeotic genes throughout development. The PR-DUB complex has weak or no activity toward 'Lys-48'- and 'Lys-63'-linked polyubiquitin chains. Atypical Polycomb group protein, which may be involved in both Polycomb group (PcG) and trithorax group (trxG) complexes. PcG and trxG proteins act by forming multiprotein complexes, which are respectively required to maintain the transcriptionally repressive and transcriptionally active state of homeotic genes throughout development. PcG and trxG protein complexes are not required to initiate repression and activation, but to maintain it during later stages of development. The protein is Polycomb group protein Asx of Drosophila melanogaster (Fruit fly).